A 254-amino-acid polypeptide reads, in one-letter code: Kallikrein-4 (254 aa).

An N-terminal signal peptide occupies residues 1–26 (MATAGNPWGWFLGYLILGVAGSLVSG). Residues 27-30 (SCSQ) constitute a propeptide that is removed on maturation. The 222-residue stretch at 31–252 (IINGEDCSPH…FTEWIEKTVQ (222 aa)) folds into the Peptidase S1 domain. 6 cysteine pairs are disulfide-bonded: cysteine 37–cysteine 167, cysteine 56–cysteine 72, cysteine 141–cysteine 241, cysteine 148–cysteine 213, cysteine 178–cysteine 192, and cysteine 203–cysteine 228. Histidine 40 is a Zn(2+) binding site. Residue histidine 71 is the Charge relay system of the active site. Zn(2+) is bound at residue glutamate 91. Aspartate 116 (charge relay system) is an active-site residue. Asparagine 169 is a glycosylation site (N-linked (GlcNAc...) asparagine). Serine 207 functions as the Charge relay system in the catalytic mechanism.

This sequence belongs to the peptidase S1 family. Kallikrein subfamily. Post-translationally, N-glycosylated. The N-glycan structures are of complex diantennary or triantennary type, which may be further modified with up to 2 sialic acid residues. Expressed in prostate.

The protein localises to the secreted. Its function is as follows. Has a major role in enamel formation. Required during the maturation stage of tooth development for clearance of enamel proteins and normal structural patterning of the crystalline matrix. This is Kallikrein-4 (KLK4) from Homo sapiens (Human).